A 61-amino-acid polypeptide reads, in one-letter code: Photosystem II reaction center protein K (61 aa).

Residues 1-24 (MLNIFSLICICLNSALHSSSFFFA) constitute a propeptide that is removed on maturation. The helical transmembrane segment at 32–52 (FFNPIVDFMPVIPVLFFLLAL) threads the bilayer.

The protein belongs to the PsbK family. PSII is composed of 1 copy each of membrane proteins PsbA, PsbB, PsbC, PsbD, PsbE, PsbF, PsbH, PsbI, PsbJ, PsbK, PsbL, PsbM, PsbT, PsbX, PsbY, PsbZ, Psb30/Ycf12, at least 3 peripheral proteins of the oxygen-evolving complex and a large number of cofactors. It forms dimeric complexes.

The protein resides in the plastid. It is found in the chloroplast thylakoid membrane. One of the components of the core complex of photosystem II (PSII). PSII is a light-driven water:plastoquinone oxidoreductase that uses light energy to abstract electrons from H(2)O, generating O(2) and a proton gradient subsequently used for ATP formation. It consists of a core antenna complex that captures photons, and an electron transfer chain that converts photonic excitation into a charge separation. The protein is Photosystem II reaction center protein K of Drimys granadensis.